Here is an 88-residue protein sequence, read N- to C-terminus: Beta-insect excitatory toxin BmKIT1 (88 aa).

The first 18 residues, 1-18 (MKFFLIFLVIFPIMGVLG), serve as a signal peptide directing secretion. An LCN-type CS-alpha/beta domain is found at 20–83 (KNGYAVDSSG…IKDATKSYCD (64 aa)). 4 disulfide bridges follow: Cys-34/Cys-55, Cys-40/Cys-60, Cys-44/Cys-62, and Cys-56/Cys-82. Residue Ile-87 is modified to Isoleucine amide.

It belongs to the long (4 C-C) scorpion toxin superfamily. Sodium channel inhibitor family. Beta subfamily. In terms of tissue distribution, expressed by the venom gland.

The protein localises to the secreted. Excitatory insect beta-toxins induce a spastic paralysis. They bind voltage-independently at site-4 of sodium channels (Nav) and shift the voltage of activation toward more negative potentials thereby affecting sodium channel activation and promoting spontaneous and repetitive firing. This toxin is active only on insects. The chain is Beta-insect excitatory toxin BmKIT1 from Olivierus martensii (Manchurian scorpion).